We begin with the raw amino-acid sequence, 132 residues long: Small ribosomal subunit protein uS11 (132 aa).

The tract at residues 113–132 is disordered; that stretch reads VTPIPHDGTRAPGGKRGRRV.

It belongs to the universal ribosomal protein uS11 family. As to quaternary structure, part of the 30S ribosomal subunit.

In terms of biological role, located on the platform of the 30S subunit. This chain is Small ribosomal subunit protein uS11, found in Methanocella arvoryzae (strain DSM 22066 / NBRC 105507 / MRE50).